Here is a 405-residue protein sequence, read N- to C-terminus: MADPKYADLPGIARNEPDVYETSDLPEDDQAEFDAELEELTSTSVEHIIVNPNAAYDKFKDKKVGTRGLDFSDRITKSKRTGYESGEYEILGEGIGIKETPQQKYQRLLHEIQELTQEVEKAQSTVKESAAEEKLTPVALAKQVAALKQQLVSTHLEKLLGPDAAINLTDPDGALAKRLLTQLDVAKTRKNPEGKSPAKGPGPDNENFVTYELHCRPEQNKFSQAAKMAELEKRLGELEAAVRNDQDTQNPLTVGLQGSCLMDTVEILQAKVNLLDVASLDQVEARLQSVLGKMNEIAKHKAAIEDADTESKVHQLYETVQKWDSMSSTLPQVVQRLLMLKQLHEQAMQFGQLLAHLDTTQQMISNSLKDNTNALAMVQKAMKENLATVEDNFTSIDARIKKLSK.

A disordered region spans residues 1–24 (MADPKYADLPGIARNEPDVYETSD). A coiled-coil region spans residues 101–134 (PQQKYQRLLHEIQELTQEVEKAQSTVKESAAEEK). Residues 186-207 (AKTRKNPEGKSPAKGPGPDNEN) form a disordered region. Positions 383–403 (KENLATVEDNFTSIDARIKKL) form a coiled coil.

Belongs to the dynactin subunit 2 family. As to quaternary structure, subunit of dynactin, a multiprotein complex part of a tripartite complex with dynein and a adapter, such as BICDL1, BICD2 or HOOK3. The dynactin complex is built around ACTR1A/ACTB filament and consists of an actin-related filament composed of a shoulder domain, a pointed end and a barbed end. Its length is defined by its flexible shoulder domain. The soulder is composed of 2 DCTN1 subunits, 4 DCTN2 and 2 DCTN3.

The protein resides in the cytoplasm. It localises to the cytoskeleton. It is found in the microtubule organizing center. The protein localises to the centrosome. Its subcellular location is the membrane. Functionally, part of the dynactin complex that activates the molecular motor dynein for ultra-processive transport along microtubules. In the dynactin soulder domain, binds the ACTR1A filament and acts as a molecular ruler to determine the length. Modulates cytoplasmic dynein binding to an organelle, and plays a role in prometaphase chromosome alignment and spindle organization during mitosis. Involved in anchoring microtubules to centrosomes. The polypeptide is Dynactin subunit 2 (dctn2) (Xenopus tropicalis (Western clawed frog)).